Reading from the N-terminus, the 908-residue chain is UPF0182 protein NT01CX_0852 (908 aa).

7 consecutive transmembrane segments (helical) span residues 8 to 28 (IGLFFCIALTVIFLKKIVNVI), 47 to 67 (FTSVISLFILVFLICFVAIKT), 96 to 116 (IINALTLIISLFIALNFSLGY), 157 to 177 (LLSLLILLAVITVIVYMFLNI), 209 to 229 (LAILGALLLLCISVGYLIKAW), 253 to 273 (FYIAISIVSIISSIIVAFSIL), and 280 to 300 (IISCVILIAVLVISERVVSGA).

Belongs to the UPF0182 family.

It localises to the cell membrane. This is UPF0182 protein NT01CX_0852 from Clostridium novyi (strain NT).